The chain runs to 153 residues: Cell division protein SepF (153 aa).

This sequence belongs to the SepF family. In terms of assembly, homodimer. Interacts with FtsZ.

The protein localises to the cytoplasm. Functionally, cell division protein that is part of the divisome complex and is recruited early to the Z-ring. Probably stimulates Z-ring formation, perhaps through the cross-linking of FtsZ protofilaments. Its function overlaps with FtsA. In Clostridium novyi (strain NT), this protein is Cell division protein SepF.